Here is a 797-residue protein sequence, read N- to C-terminus: Speckle targeted PIP5K1A-regulated poly(A) polymerase (797 aa).

A Matrin-type zinc finger spans residues 14–44 (FHCNLCHVNIPNRPSLEDHVKGKKHLHLLRL). Residues 54–126 (NSVFVSGFKA…LKLRVKPREK (73 aa)) form the RRM domain. Ser205 is an ATP binding site. Mg(2+)-binding residues include Asp216 and Asp218. Positions 216, 218, 319, 341, 363, and 495 each coordinate UTP. Asn319 provides a ligand contact to ATP. The region spanning 421-495 (DLCTLLFGFF…NVLDPFELNH (75 aa)) is the PAP-associated domain. Residues 544–787 (QSEAAASSQP…FLPKMAETIM (244 aa)) form a KA1; binds the bulging loops of U6 snRNA but is dispensable for terminal uridylyltransferase activity region. The disordered stretch occupies residues 611–659 (EETQSLDKTDKSGSEMEVNNNRSLEDTNIQVKGEAGKKRPLSVEEGPST). The segment covering 615-624 (SLDKTDKSGS) has biased composition (basic and acidic residues). Polar residues predominate over residues 627–640 (EVNNNRSLEDTNIQ).

It belongs to the DNA polymerase type-B-like family. In terms of assembly, associates with the cleavage and polyadenylation specificity factor (CPSF) complex. The cofactor is Mg(2+). Mn(2+) is required as a cofactor.

It is found in the nucleus. The protein localises to the nucleolus. It localises to the nucleus speckle. The enzyme catalyses RNA(n) + UTP = RNA(n)-3'-uridine ribonucleotide + diphosphate. It catalyses the reaction RNA(n) + ATP = RNA(n)-3'-adenine ribonucleotide + diphosphate. In terms of biological role, poly(A) polymerase that creates the 3'-poly(A) tail of specific pre-mRNAs. In addition to polyadenylation, it is also required for the 3'-end cleavage of pre-mRNAs: binds to the 3'UTR of targeted pre-mRNAs and promotes the recruitment and assembly of the CPSF complex on the 3'UTR of pre-mRNAs. In addition to adenylyltransferase activity, also has uridylyltransferase activity. However, the ATP ratio is higher than UTP in cells, suggesting that it functions primarily as a poly(A) polymerase. The protein is Speckle targeted PIP5K1A-regulated poly(A) polymerase (tut1) of Danio rerio (Zebrafish).